We begin with the raw amino-acid sequence, 203 residues long: Regulator of free ubiquitin chains 1 (203 aa).

It belongs to the RFU1 family.

Its subcellular location is the endosome. Inhibitor of the DOA4 deubiquitinase involved in the regulation of protein degradation by the proteasome and maintenance of a normal level of free ubiquitin. This chain is Regulator of free ubiquitin chains 1 (RFU1), found in Candida glabrata (strain ATCC 2001 / BCRC 20586 / JCM 3761 / NBRC 0622 / NRRL Y-65 / CBS 138) (Yeast).